The sequence spans 1441 residues: Lysophospholipase NTE1 (1441 aa).

Residues 1-22 (MWLTSYVLPRLKNILLLQFHIT) are Lumenal-facing. Residues 23–43 (LPLNYLVLLLLSTVIITYLFL) traverse the membrane as a helical segment. Residues 44–1441 (RTRILSNYSQ…ENMLQRRNSI (1398 aa)) are Cytoplasmic-facing. Disordered stretches follow at residues 154–173 (SNPSGDAAANATAFEPPSND), 210–236 (THLNEGTHPSTTNNTPGPGSPNLTGEI), 376–445 (QDDT…NSSS), and 551–585 (NRTGGKMASHSKRLNGSSRSNSRTDRSESFDHFRN). A compositionally biased stretch (polar residues) spans 376-388 (QDDTGSSASTIQK). Residues 572-585 (SRTDRSESFDHFRN) are compositionally biased toward basic and acidic residues. Residues 592–718 (NQFS…LTNS) and 707–836 (IYLK…VAKK) contribute to the a nucleoside 3',5'-cyclic phosphate site. The PNPLA domain maps to 1137–1301 (LVLGGGGARG…VDNLPVTEMT (165 aa)). The GXGXXG signature appears at 1141-1146 (GGGARG). A GXSXG motif is present at residues 1168–1172 (GTSIG). Ser-1170 acts as the Nucleophile in catalysis. The Proton acceptor role is filled by Asp-1288. Positions 1288–1290 (DGG) match the DGA/G motif.

Belongs to the NTE family.

It localises to the endoplasmic reticulum membrane. It carries out the reaction a 1-acyl-sn-glycero-3-phosphocholine + H2O = sn-glycerol 3-phosphocholine + a fatty acid + H(+). Its activity is regulated as follows. Inhibited by organophosphorus esters. Functionally, intracellular phospholipase B that catalyzes the double deacylation of phosphatidylcholine (PC) to glycerophosphocholine (GroPCho). Plays an important role in membrane lipid homeostasis. Responsible for the rapid PC turnover in response to inositol, elevated temperatures, or when choline is present in the growth medium. This Kluyveromyces lactis (strain ATCC 8585 / CBS 2359 / DSM 70799 / NBRC 1267 / NRRL Y-1140 / WM37) (Yeast) protein is Lysophospholipase NTE1 (NTE1).